The sequence spans 294 residues: Urease accessory protein UreD 1 (294 aa).

Positions 1 to 20 (MALSLDDLPEKPAPAEPVSA) are disordered.

This sequence belongs to the UreD family. In terms of assembly, ureD, UreF and UreG form a complex that acts as a GTP-hydrolysis-dependent molecular chaperone, activating the urease apoprotein by helping to assemble the nickel containing metallocenter of UreC. The UreE protein probably delivers the nickel.

The protein localises to the cytoplasm. Functionally, required for maturation of urease via the functional incorporation of the urease nickel metallocenter. This chain is Urease accessory protein UreD 1, found in Methylorubrum populi (strain ATCC BAA-705 / NCIMB 13946 / BJ001) (Methylobacterium populi).